Consider the following 209-residue polypeptide: MKKAIMGKKIGMTQIFNEAGKVIPVTVVEAGPCVVVQKKTVEKDGYEAIQVGFGDIREKLVNKPAKGHFEKAGVVLKRTLKEFRLEDVSQYEVGQEIKADVFEIGDKIDVSGVSKGKGFQGVIKRWNQQRGPMTHGSKFKRAPGSMGASSDPSRTFKNKRMPGHMGCVNTTVMNLEVVKVIAEKNLLLIKGGIPGPNKGTVVIRNAVKA.

Residues 130-162 (RGPMTHGSKFKRAPGSMGASSDPSRTFKNKRMP) are disordered.

Belongs to the universal ribosomal protein uL3 family. In terms of assembly, part of the 50S ribosomal subunit. Forms a cluster with proteins L14 and L19.

Its function is as follows. One of the primary rRNA binding proteins, it binds directly near the 3'-end of the 23S rRNA, where it nucleates assembly of the 50S subunit. This is Large ribosomal subunit protein uL3 from Clostridium botulinum (strain Alaska E43 / Type E3).